The sequence spans 157 residues: Transcriptional repressor NrdR (157 aa).

The tract at residues 1–21 is disordered; that stretch reads MRCPYCSSEDSQVKDSRPAED. A zinc finger lies at 3–34; that stretch reads CPYCSSEDSQVKDSRPAEDGNAIRRRRICPDC. Basic and acidic residues predominate over residues 11–21; sequence SQVKDSRPAED. Positions 49–139 constitute an ATP-cone domain; that stretch reads LMIIKKTGRK…VYRDFSHAED (91 aa).

The protein belongs to the NrdR family. The cofactor is Zn(2+).

Its function is as follows. Negatively regulates transcription of bacterial ribonucleotide reductase nrd genes and operons by binding to NrdR-boxes. This is Transcriptional repressor NrdR from Sinorhizobium fredii (strain NBRC 101917 / NGR234).